We begin with the raw amino-acid sequence, 106 residues long: uncharacterized protein (106 aa).

This is an uncharacterized protein from Haemophilus influenzae (strain ATCC 51907 / DSM 11121 / KW20 / Rd).